Reading from the N-terminus, the 627-residue chain is Druantia protein DruC (627 aa).

Its subcellular location is the cytoplasm. Functionally, component of antiviral defense system Druantia type I, composed of DruA, DruB, DruC, DruD and DruE. Expression of Druantia in E.coli (strain MG1655) confers resistance to phage lambda, SECphi18, SECphi27 and T4. The polypeptide is Druantia protein DruC (Escherichia coli (strain UMEA 4076-1)).